A 309-amino-acid polypeptide reads, in one-letter code: MTTKKADYIWFNGEMVRWEDAKVHVMSHALHYGTSVFEGIRCYDSHKGPVVFRHREHMQRLRDSAKIYRFPVSQSIDELMEACRDVIRKNNLTSAYIRPLVFVGDVGMGVNPPPGYTTDVIIAAFPWGAYLGAEALDQGIDAMVSSWNRAAPNTIPTAAKAGGNYLSSLLVGSEARRHGYQEGIALDVNGYISEGAGENLFEVKDGVLFTPPFTSSALPGITRDAIIKLAKELGIEVREQVLSRESLYLADEVFMSGTAAEITPVRSVDGIQVGEGRCGPVTKRIQQAFFGLFTGETEDKWGWLDPVNS.

Lysine 160 carries the N6-(pyridoxal phosphate)lysine modification.

It belongs to the class-IV pyridoxal-phosphate-dependent aminotransferase family. As to quaternary structure, homohexamer. It depends on pyridoxal 5'-phosphate as a cofactor.

The enzyme catalyses L-leucine + 2-oxoglutarate = 4-methyl-2-oxopentanoate + L-glutamate. The catalysed reaction is L-isoleucine + 2-oxoglutarate = (S)-3-methyl-2-oxopentanoate + L-glutamate. It carries out the reaction L-valine + 2-oxoglutarate = 3-methyl-2-oxobutanoate + L-glutamate. It participates in amino-acid biosynthesis; L-isoleucine biosynthesis; L-isoleucine from 2-oxobutanoate: step 4/4. The protein operates within amino-acid biosynthesis; L-leucine biosynthesis; L-leucine from 3-methyl-2-oxobutanoate: step 4/4. It functions in the pathway amino-acid biosynthesis; L-valine biosynthesis; L-valine from pyruvate: step 4/4. Functionally, acts on leucine, isoleucine and valine. The chain is Branched-chain-amino-acid aminotransferase (ilvE) from Salmonella typhi.